Consider the following 196-residue polypeptide: dTTP/UTP pyrophosphatase (196 aa).

Residue D78 is the Proton acceptor of the active site.

The protein belongs to the Maf family. YhdE subfamily. It depends on a divalent metal cation as a cofactor.

The protein localises to the cytoplasm. The enzyme catalyses dTTP + H2O = dTMP + diphosphate + H(+). It carries out the reaction UTP + H2O = UMP + diphosphate + H(+). Nucleoside triphosphate pyrophosphatase that hydrolyzes dTTP and UTP. May have a dual role in cell division arrest and in preventing the incorporation of modified nucleotides into cellular nucleic acids. This Photobacterium profundum (strain SS9) protein is dTTP/UTP pyrophosphatase.